Reading from the N-terminus, the 294-residue chain is Putative inactive magnesium transporter MRS2-8 (294 aa).

A coiled-coil region spans residues 179 to 216 (KLKSSMTRLTAQVQKIKDELEQLLEDDEDMAELYLSRK).

The protein belongs to the CorA metal ion transporter (MIT) (TC 1.A.35.5) family.

The chain is Putative inactive magnesium transporter MRS2-8 (MRS2-8) from Arabidopsis thaliana (Mouse-ear cress).